A 663-amino-acid chain; its full sequence is 4-hydroxy-3-methylbut-2-en-1-yl diphosphate synthase (flavodoxin) (663 aa).

Positions 568, 571, 602, and 609 each coordinate [4Fe-4S] cluster.

Belongs to the IspG family. It depends on [4Fe-4S] cluster as a cofactor.

It catalyses the reaction (2E)-4-hydroxy-3-methylbut-2-enyl diphosphate + oxidized [flavodoxin] + H2O + 2 H(+) = 2-C-methyl-D-erythritol 2,4-cyclic diphosphate + reduced [flavodoxin]. It functions in the pathway isoprenoid biosynthesis; isopentenyl diphosphate biosynthesis via DXP pathway; isopentenyl diphosphate from 1-deoxy-D-xylulose 5-phosphate: step 5/6. Converts 2C-methyl-D-erythritol 2,4-cyclodiphosphate (ME-2,4cPP) into 1-hydroxy-2-methyl-2-(E)-butenyl 4-diphosphate. This Leptospira interrogans serogroup Icterohaemorrhagiae serovar copenhageni (strain Fiocruz L1-130) protein is 4-hydroxy-3-methylbut-2-en-1-yl diphosphate synthase (flavodoxin).